The following is a 940-amino-acid chain: UvrABC system protein A (940 aa).

Residue 31 to 38 coordinates ATP; the sequence is GLSGSGKS. The segment at 252-279 adopts a C4-type zinc-finger fold; that stretch reads CPHCGYSMQELEPRLFSFNNPAGACGTC. 2 consecutive ABC transporter domains span residues 309 to 586 and 606 to 936; these read WDQK…PDSL and RDKN…RFLK. 639–646 serves as a coordination point for ATP; it reads GVSGSGKS. A C4-type zinc finger spans residues 739-765; that stretch reads CEACQGDGVIKVEMHFLPDVYVPCDVC.

This sequence belongs to the ABC transporter superfamily. UvrA family. Forms a heterotetramer with UvrB during the search for lesions.

The protein resides in the cytoplasm. In terms of biological role, the UvrABC repair system catalyzes the recognition and processing of DNA lesions. UvrA is an ATPase and a DNA-binding protein. A damage recognition complex composed of 2 UvrA and 2 UvrB subunits scans DNA for abnormalities. When the presence of a lesion has been verified by UvrB, the UvrA molecules dissociate. The chain is UvrABC system protein A from Vibrio vulnificus (strain CMCP6).